A 431-amino-acid polypeptide reads, in one-letter code: L-lysine N6-monooxygenase MbtG (431 aa).

The first 21 residues, 1–21, serve as a signal peptide directing secretion; that stretch reads MNPTLAVLGAGAKAVAVAAKA.

It belongs to the lysine N(6)-hydroxylase/L-ornithine N(5)-oxygenase family. FAD serves as cofactor.

The enzyme catalyses L-lysine + NADPH + O2 = N(6)-hydroxy-L-lysine + NADP(+) + H2O. It functions in the pathway siderophore biosynthesis; mycobactin biosynthesis. Flavoprotein monooxygenase required for N-hydroxylation of the two acylated lysine residues during mycobactin assembly, thus producing the hydroxamate groups necessary for iron sequestration. Is also able, but less efficiently, to hydroxylate L-lysine (non acylated) in vitro. This chain is L-lysine N6-monooxygenase MbtG (mbtG), found in Mycobacterium bovis (strain ATCC BAA-935 / AF2122/97).